Consider the following 837-residue polypeptide: Probable aldehyde oxidase 4 (837 aa).

The 90-residue stretch at 9–98 folds into the 2Fe-2S ferredoxin-type domain; that stretch reads ERVVFELNGE…FCSIITTEGL (90 aa). Residues Cys50, Cys55, Cys58, and Cys80 each contribute to the [2Fe-2S] cluster site. The 188-residue stretch at 240 to 427 folds into the FAD-binding PCMH-type domain; sequence ISGPREGWYC…LSIFIPHWAS (188 aa).

Belongs to the xanthine dehydrogenase family. As to quaternary structure, aldehyde oxidases (AO) are homodimers and heterodimers of AO subunits. [2Fe-2S] cluster is required as a cofactor. The cofactor is FAD. Mo-molybdopterin serves as cofactor.

The catalysed reaction is an aldehyde + O2 + H2O = a carboxylate + H2O2 + H(+). This Oryza sativa subsp. japonica (Rice) protein is Probable aldehyde oxidase 4.